A 172-amino-acid polypeptide reads, in one-letter code: Acetolactate synthase small subunit (172 aa).

The region spanning 4 to 78 is the ACT domain; the sequence is TLSVLVEDEA…NILKVDNITE (75 aa).

The protein belongs to the acetolactate synthase small subunit family. As to quaternary structure, dimer of large and small chains.

The protein resides in the plastid. It is found in the chloroplast. The enzyme catalyses 2 pyruvate + H(+) = (2S)-2-acetolactate + CO2. The protein operates within amino-acid biosynthesis; L-isoleucine biosynthesis; L-isoleucine from 2-oxobutanoate: step 1/4. Its pathway is amino-acid biosynthesis; L-valine biosynthesis; L-valine from pyruvate: step 1/4. In Cyanidium caldarium (Red alga), this protein is Acetolactate synthase small subunit (ilvH).